Here is a 277-residue protein sequence, read N- to C-terminus: Protein CIMAP1D (277 aa).

STPGR repeat units lie at residues 122–148, 202–227, and 238–263; these read PGPG…LGSR, PGPG…ILGR, and PGPG…MGIR. Residues 181 to 277 are disordered; sequence PSYTVVGRTP…ASTMVGDTKC (97 aa).

Belongs to the CIMAP family.

This is Protein CIMAP1D (Cimap1d) from Mus musculus (Mouse).